A 178-amino-acid polypeptide reads, in one-letter code: Caveolin-1 (178 aa).

Ser2 bears the N-acetylserine mark. Ser2 is modified (phosphoserine). The segment at 2–94 (SGGKYVDSEG…WKASFTTFTV (93 aa)) is required for homooligomerization. The Cytoplasmic portion of the chain corresponds to 2–104 (SGGKYVDSEG…TKYWFYRLLS (103 aa)). At Lys5 the chain carries N6-acetyllysine; alternate. Lys5 is covalently cross-linked (Glycyl lysine isopeptide (Lys-Gly) (interchain with G-Cter in ubiquitin); alternate). Residue Tyr6 is modified to Phosphotyrosine. Residue Ser9 is modified to Phosphoserine. Tyr14 is modified (phosphotyrosine; by ABL1). The residue at position 25 (Tyr25) is a Phosphotyrosine. Residues Lys26 and Lys30 each participate in a glycyl lysine isopeptide (Lys-Gly) (interchain with G-Cter in ubiquitin) cross-link. Ser37 is subject to Phosphoserine. Residues Lys39, Lys47, and Lys57 each participate in a glycyl lysine isopeptide (Lys-Gly) (interchain with G-Cter in ubiquitin) cross-link. An interaction with CAVIN3 region spans residues 82–94 (DGIWKASFTTFTV). The helical intramembrane region spans 105-125 (ALFGIPMALIWGIYFAILSFL). Topologically, residues 126–178 (HIWAVVPCIKSFLIEIQCISRVYSIYIHTVCDPLFEAIGKIFSNVRIGLQKEI) are cytoplasmic. The tract at residues 131–142 (VPCIKSFLIEIQ) is interacts with SPRY1, SPRY2, SPRY3 and SPRY4. S-palmitoyl cysteine attachment occurs at residues Cys133, Cys143, and Cys156. An interacts with SPRY1, SPRY2, and SPRY4 region spans residues 149–160 (SIYIHTVCDPLF). An interacts with SPRY1, SPRY2, SPRY3 and SPRY4 region spans residues 167-178 (FSNVRIGLQKEI).

The protein belongs to the caveolin family. As to quaternary structure, homooligomer. Interacts with GLIPR2. Interacts with NOSTRIN. Interacts with SNAP25 and STX1A. Interacts (via the N-terminus) with DPP4; the interaction is direct. Interacts with CTNNB1, CDH1 and JUP. Interacts with PACSIN2; this interaction induces membrane tubulation. Interacts with SLC7A9. Interacts with BMX and BTK. Interacts with TGFBR1. Interacts with CAVIN3 (via leucine-zipper domain) in a cholesterol-sensitive manner. Interacts with CAVIN1. Interacts with EHD2 in a cholesterol-dependent manner. Forms a ternary complex with UBXN6 and VCP; mediates CAV1 targeting to lysosomes for degradation. Interacts with ABCG1; this interaction regulates ABCG1-mediated cholesterol efflux. Interacts with NEU3; this interaction enhances NEU3 sialidase activity within caveola. Interacts (via C-terminus) with SPRY1, SPRY2 (via C-terminus), SPRY3, and SPRY4. Interacts with IGFBP5; this interaction allows trafficking of IGFBP5 from the plasma membrane to the nucleus. Post-translationally, phosphorylated at Tyr-14 by ABL1 in response to oxidative stress. Ubiquitinated. Undergo monoubiquitination and multi- and/or polyubiquitination. Monoubiquitination of N-terminal lysines promotes integration in a ternary complex with UBXN6 and VCP which promotes oligomeric CAV1 targeting to lysosomes for degradation. Ubiquitinated by ZNRF1; leading to degradation and modulation of the TLR4-mediated immune response.

The protein resides in the golgi apparatus membrane. It is found in the cell membrane. Its subcellular location is the membrane. It localises to the caveola. The protein localises to the membrane raft. Its function is as follows. May act as a scaffolding protein within caveolar membranes. Forms a stable heterooligomeric complex with CAV2 that targets to lipid rafts and drives caveolae formation. Mediates the recruitment of CAVIN proteins (CAVIN1/2/3/4) to the caveolae. Interacts directly with G-protein alpha subunits and can functionally regulate their activity. Involved in the costimulatory signal essential for T-cell receptor (TCR)-mediated T-cell activation. Its binding to DPP4 induces T-cell proliferation and NF-kappa-B activation in a T-cell receptor/CD3-dependent manner. Recruits CTNNB1 to caveolar membranes and may regulate CTNNB1-mediated signaling through the Wnt pathway. Negatively regulates TGFB1-mediated activation of SMAD2/3 by mediating the internalization of TGFBR1 from membrane rafts leading to its subsequent degradation. Binds 20(S)-hydroxycholesterol (20(S)-OHC). The polypeptide is Caveolin-1 (CAV1) (Saimiri boliviensis boliviensis (Bolivian squirrel monkey)).